Reading from the N-terminus, the 202-residue chain is Probable molybdenum cofactor guanylyltransferase (202 aa).

GTP contacts are provided by residues 13 to 15 (LAG), Lys-25, Asp-71, and Asp-103. Residue Asp-103 coordinates Mg(2+).

The protein belongs to the MobA family. Requires Mg(2+) as cofactor.

Its subcellular location is the cytoplasm. The catalysed reaction is Mo-molybdopterin + GTP + H(+) = Mo-molybdopterin guanine dinucleotide + diphosphate. Transfers a GMP moiety from GTP to Mo-molybdopterin (Mo-MPT) cofactor (Moco or molybdenum cofactor) to form Mo-molybdopterin guanine dinucleotide (Mo-MGD) cofactor. This Opitutus terrae (strain DSM 11246 / JCM 15787 / PB90-1) protein is Probable molybdenum cofactor guanylyltransferase.